A 676-amino-acid polypeptide reads, in one-letter code: tRNA 5-methylaminomethyl-2-thiouridine biosynthesis bifunctional protein MnmC (676 aa).

A tRNA (mnm(5)s(2)U34)-methyltransferase region spans residues 1–241; sequence MFTVTPAKIY…KRECLCGIKN (241 aa). The segment at 268-676 is FAD-dependent cmnm(5)s(2)U34 oxidoreductase; it reads IGGGIASLFT…RKLLKGTEIK (409 aa).

The protein in the N-terminal section; belongs to the methyltransferase superfamily. tRNA (mnm(5)s(2)U34)-methyltransferase family. It in the C-terminal section; belongs to the DAO family. It depends on FAD as a cofactor.

It localises to the cytoplasm. The catalysed reaction is 5-aminomethyl-2-thiouridine(34) in tRNA + S-adenosyl-L-methionine = 5-methylaminomethyl-2-thiouridine(34) in tRNA + S-adenosyl-L-homocysteine + H(+). In terms of biological role, catalyzes the last two steps in the biosynthesis of 5-methylaminomethyl-2-thiouridine (mnm(5)s(2)U) at the wobble position (U34) in tRNA. Catalyzes the FAD-dependent demodification of cmnm(5)s(2)U34 to nm(5)s(2)U34, followed by the transfer of a methyl group from S-adenosyl-L-methionine to nm(5)s(2)U34, to form mnm(5)s(2)U34. The sequence is that of tRNA 5-methylaminomethyl-2-thiouridine biosynthesis bifunctional protein MnmC from Histophilus somni (strain 129Pt) (Haemophilus somnus).